A 201-amino-acid polypeptide reads, in one-letter code: MSRYRGPRFKKIRRLGALPGLTNKRPRTVRDLRNQSRSGKKSQYRIRLEEKQKLRFHYGLTERQLINYVRIARKAKGSTGEILIQLLEMRLDNILFRLGMASTIPAARQLVNHRHIFVNGHIVDIPSYRCKPRDIITSKDKPKSGALIKNSIEAFPREELPNHLTLHPAPYKGLINQIIDTKWVGLKINELLVVEYYSRQT.

The 61-residue stretch at 89 to 149 (MRLDNILFRL…DKPKSGALIK (61 aa)) folds into the S4 RNA-binding domain.

It belongs to the universal ribosomal protein uS4 family. In terms of assembly, part of the 30S ribosomal subunit. Contacts protein S5. The interaction surface between S4 and S5 is involved in control of translational fidelity.

It localises to the plastid. In terms of biological role, one of the primary rRNA binding proteins, it binds directly to 16S rRNA where it nucleates assembly of the body of the 30S subunit. Functionally, with S5 and S12 plays an important role in translational accuracy. This Cuscuta exaltata (Tall dodder) protein is Small ribosomal subunit protein uS4c (rps4).